Reading from the N-terminus, the 282-residue chain is Pantothenate synthetase (282 aa).

30 to 37 (MGALHAGH) lines the ATP pocket. The Proton donor role is filled by His37. Gln61 lines the (R)-pantoate pocket. Gln61 is a binding site for beta-alanine. 147-150 (GEKD) serves as a coordination point for ATP. A (R)-pantoate-binding site is contributed by Gln153. Residues Val176 and 184–187 (LSSR) contribute to the ATP site.

This sequence belongs to the pantothenate synthetase family. In terms of assembly, homodimer.

Its subcellular location is the cytoplasm. The enzyme catalyses (R)-pantoate + beta-alanine + ATP = (R)-pantothenate + AMP + diphosphate + H(+). It functions in the pathway cofactor biosynthesis; (R)-pantothenate biosynthesis; (R)-pantothenate from (R)-pantoate and beta-alanine: step 1/1. Catalyzes the condensation of pantoate with beta-alanine in an ATP-dependent reaction via a pantoyl-adenylate intermediate. The protein is Pantothenate synthetase of Bacteroides fragilis (strain ATCC 25285 / DSM 2151 / CCUG 4856 / JCM 11019 / LMG 10263 / NCTC 9343 / Onslow / VPI 2553 / EN-2).